The sequence spans 356 residues: uncharacterized protein (356 aa).

The first 21 residues, 1–21 (MHWSRFVGIFLVFSVFSLVNC), serve as a signal peptide directing secretion. Residues 293 to 317 (RPETDYEGANLPNIPSKKGSANQPV) form a disordered region.

This is an uncharacterized protein from Acanthamoeba polyphaga mimivirus (APMV).